We begin with the raw amino-acid sequence, 254 residues long: 3-deoxy-manno-octulosonate cytidylyltransferase (254 aa).

It belongs to the KdsB family.

The protein localises to the cytoplasm. It catalyses the reaction 3-deoxy-alpha-D-manno-oct-2-ulosonate + CTP = CMP-3-deoxy-beta-D-manno-octulosonate + diphosphate. The protein operates within nucleotide-sugar biosynthesis; CMP-3-deoxy-D-manno-octulosonate biosynthesis; CMP-3-deoxy-D-manno-octulosonate from 3-deoxy-D-manno-octulosonate and CTP: step 1/1. It functions in the pathway bacterial outer membrane biogenesis; lipopolysaccharide biosynthesis. Functionally, activates KDO (a required 8-carbon sugar) for incorporation into bacterial lipopolysaccharide in Gram-negative bacteria. This chain is 3-deoxy-manno-octulosonate cytidylyltransferase, found in Chlamydia abortus (strain DSM 27085 / S26/3) (Chlamydophila abortus).